Here is a 416-residue protein sequence, read N- to C-terminus: Tryptophan synthase beta chain (416 aa).

Lys109 is subject to N6-(pyridoxal phosphate)lysine.

It belongs to the TrpB family. Tetramer of two alpha and two beta chains. Requires pyridoxal 5'-phosphate as cofactor.

It catalyses the reaction (1S,2R)-1-C-(indol-3-yl)glycerol 3-phosphate + L-serine = D-glyceraldehyde 3-phosphate + L-tryptophan + H2O. The protein operates within amino-acid biosynthesis; L-tryptophan biosynthesis; L-tryptophan from chorismate: step 5/5. Functionally, the beta subunit is responsible for the synthesis of L-tryptophan from indole and L-serine. This chain is Tryptophan synthase beta chain, found in Mesorhizobium japonicum (strain LMG 29417 / CECT 9101 / MAFF 303099) (Mesorhizobium loti (strain MAFF 303099)).